The sequence spans 350 residues: Induced myeloid leukemia cell differentiation protein Mcl-1 homolog (350 aa).

Glycyl lysine isopeptide (Lys-Gly) (interchain with G-Cter in ubiquitin) cross-links involve residues lysine 5 and lysine 40. The PEST-like stretch occupies residues 104-175; the sequence is CASPPEEMEG…PAEEEEDELF (72 aa). Serine 121 carries the post-translational modification Phosphoserine. A Glycyl lysine isopeptide (Lys-Gly) (interchain with G-Cter in ubiquitin) cross-link involves residue lysine 136. A disordered region spans residues 148–170; it reads GEASSGPGTDGSLPSTPPPAEEE. Phosphoserine; by GSK3-alpha and GSK3-beta is present on serine 159. Serine 162 bears the Phosphoserine mark. Threonine 163 carries the phosphothreonine; by MAPK modification. Residues lysine 194 and lysine 197 each participate in a glycyl lysine isopeptide (Lys-Gly) (interchain with G-Cter in ubiquitin) cross-link. The BH3 motif lies at 209–223; that stretch reads ALETLRRVGDGVQRN. Positions 252–272 match the BH1 motif; the sequence is HVFSDGVTNWGRIVTLISFGA. The BH2 signature appears at 304-319; the sequence is DWLVKQRGWDGFVEFF. Residues 328–348 traverse the membrane as a helical segment; that stretch reads IRNVLLAFAGVAGVGAGLAYL.

The protein belongs to the Bcl-2 family. Interacts with HIF3A (via C-terminus domain). Interacts with BOK, BIK, BAX, BAK1, and TPT1. Interacts with unphosphorylated BAD. Interacts with BMF, BBC3 and PMAIP1. Interacts with BOP. Interacts with BCL2L11; may sequester BCL2L11 to prevent its pro-apoptotic activity. Interacts with GIMAP5 and HSPA8/HSC70; the interaction between HSPA8 and MCL1 is impaired in the absence of GIMAP5. Post-translationally, cleaved by CASP3 during apoptosis, yielding a pro-apoptotic C-terminal fragment. In terms of processing, rapidly degraded in the absence of phosphorylation in the PEST region. Phosphorylated on Ser-159, by GSK3, in response to IL3/interleukin-3 withdrawal. Phosphorylation at Ser-159 induces ubiquitination and proteasomal degradation, abrogating the anti-apoptotic activity. Treatment with taxol or okadaic acid induces phosphorylation on additional sites. Post-translationally, ubiquitinated. Ubiquitination is induced by phosphorylation at Ser-159. Deubiquitinated by USP20; leading to increased stability.

The protein localises to the membrane. It is found in the cytoplasm. It localises to the mitochondrion. The protein resides in the nucleus. Its subcellular location is the nucleoplasm. Functionally, involved in the regulation of apoptosis versus cell survival, and in the maintenance of viability but not of proliferation. Mediates its effects by interactions with a number of other regulators of apoptosis. In Felis catus (Cat), this protein is Induced myeloid leukemia cell differentiation protein Mcl-1 homolog (MCL1).